We begin with the raw amino-acid sequence, 252 residues long: Zinc import ATP-binding protein ZnuC (252 aa).

The 216-residue stretch at valine 5–arginine 220 folds into the ABC transporter domain. Glycine 37–serine 44 is an ATP binding site.

The protein belongs to the ABC transporter superfamily. Zinc importer (TC 3.A.1.15.5) family. The complex is composed of two ATP-binding proteins (ZnuC), two transmembrane proteins (ZnuB) and a solute-binding protein (ZnuA).

Its subcellular location is the cell inner membrane. It carries out the reaction Zn(2+)(out) + ATP(in) + H2O(in) = Zn(2+)(in) + ADP(in) + phosphate(in) + H(+)(in). Its function is as follows. Part of the ABC transporter complex ZnuABC involved in zinc import. Responsible for energy coupling to the transport system. This chain is Zinc import ATP-binding protein ZnuC, found in Yersinia enterocolitica serotype O:8 / biotype 1B (strain NCTC 13174 / 8081).